The sequence spans 508 residues: Glycerol kinase (508 aa).

Thr-15 is an ADP binding site. Residues Thr-15, Ser-16, and Ser-17 each contribute to the ATP site. Thr-15 lines the sn-glycerol 3-phosphate pocket. Arg-19 contacts ADP. Sn-glycerol 3-phosphate contacts are provided by Arg-85, Glu-86, Tyr-138, and Asp-251. 5 residues coordinate glycerol: Arg-85, Glu-86, Tyr-138, Asp-251, and Gln-252. ADP contacts are provided by Thr-273, Gly-317, and Gly-419. Residues Thr-273, Gly-317, and Gly-419 each contribute to the ATP site.

The protein belongs to the FGGY kinase family.

The enzyme catalyses glycerol + ATP = sn-glycerol 3-phosphate + ADP + H(+). It participates in polyol metabolism; glycerol degradation via glycerol kinase pathway; sn-glycerol 3-phosphate from glycerol: step 1/1. Its activity is regulated as follows. Inhibited by fructose 1,6-bisphosphate (FBP). Its function is as follows. Key enzyme in the regulation of glycerol uptake and metabolism. Catalyzes the phosphorylation of glycerol to yield sn-glycerol 3-phosphate. The protein is Glycerol kinase of Mycoplasma genitalium (strain ATCC 33530 / DSM 19775 / NCTC 10195 / G37) (Mycoplasmoides genitalium).